Here is a 350-residue protein sequence, read N- to C-terminus: Protein RecA (350 aa).

67 to 74 contributes to the ATP binding site; sequence GPESSGKT.

Belongs to the RecA family.

The protein localises to the cytoplasm. Functionally, can catalyze the hydrolysis of ATP in the presence of single-stranded DNA, the ATP-dependent uptake of single-stranded DNA by duplex DNA, and the ATP-dependent hybridization of homologous single-stranded DNAs. It interacts with LexA causing its activation and leading to its autocatalytic cleavage. The sequence is that of Protein RecA from Chlamydia caviae (strain ATCC VR-813 / DSM 19441 / 03DC25 / GPIC) (Chlamydophila caviae).